Here is a 145-residue protein sequence, read N- to C-terminus: Ribonuclease H (145 aa).

The region spanning 1-141 is the RNase H type-1 domain; it reads MQEVTIYSDG…ADALANRGVA (141 aa). Residues D9, E47, D69, and D133 each coordinate Mg(2+).

This sequence belongs to the RNase H family. Monomer. Mg(2+) is required as a cofactor.

It is found in the cytoplasm. It catalyses the reaction Endonucleolytic cleavage to 5'-phosphomonoester.. In terms of biological role, endonuclease that specifically degrades the RNA of RNA-DNA hybrids. This is Ribonuclease H from Cupriavidus metallidurans (strain ATCC 43123 / DSM 2839 / NBRC 102507 / CH34) (Ralstonia metallidurans).